The primary structure comprises 206 residues: MKRTKTSKAWMKEHVNDFFVRQAKKEGYRSRAAYKLMEIAERDHLFKPGMTVVDLGAAPGGWSQVAAEKLKGKGRAVALDILEMAPISGVTFIQGDFREASVLAELKEQLKDLPVDLVICDMSPNITGIRVIDQTRGMHLAELALEFCTEQLNSGGNFLVKVFQGSGFDEFFRAMRATFHRVVTRKPLASRGRSSEIYLLGLGKRD.

Residues Gly60, Trp62, Asp80, Asp96, and Asp121 each contribute to the S-adenosyl-L-methionine site. Lys161 (proton acceptor) is an active-site residue.

The protein belongs to the class I-like SAM-binding methyltransferase superfamily. RNA methyltransferase RlmE family.

Its subcellular location is the cytoplasm. It carries out the reaction uridine(2552) in 23S rRNA + S-adenosyl-L-methionine = 2'-O-methyluridine(2552) in 23S rRNA + S-adenosyl-L-homocysteine + H(+). Specifically methylates the uridine in position 2552 of 23S rRNA at the 2'-O position of the ribose in the fully assembled 50S ribosomal subunit. The polypeptide is Ribosomal RNA large subunit methyltransferase E (Nitrosospira multiformis (strain ATCC 25196 / NCIMB 11849 / C 71)).